A 202-amino-acid polypeptide reads, in one-letter code: UPF0301 protein BCG_0069 (202 aa).

The protein belongs to the UPF0301 (AlgH) family.

In Mycobacterium bovis (strain BCG / Pasteur 1173P2), this protein is UPF0301 protein BCG_0069.